The sequence spans 216 residues: MEFRLVDLKTWKRKEYFTHYFESVPCTYSMTVKLDITTIKTGKAKLYPALLYAVSTVVNRHEEFRMTVDDEGQIGIFSEMMPCYTIFQKDTEMFSNIWTEYIGDYTEFCKQYEKDMQQYGENKGMMAKPNPPVNTFPVSMIPWTTFEGFNLNLQKGYGYLLPIFTFGRYYEENGKYWIPLSIQVHHAVCDGFHTCRFINELQDVIQSLQNHGGDEE.

The Proton acceptor role is filled by H186.

Belongs to the chloramphenicol acetyltransferase family. As to quaternary structure, homotrimer.

It carries out the reaction chloramphenicol + acetyl-CoA = chloramphenicol 3-acetate + CoA. Functionally, this enzyme is an effector of chloramphenicol resistance in bacteria. The polypeptide is Chloramphenicol acetyltransferase (cat) (Vibrio anguillarum (Listonella anguillarum)).